We begin with the raw amino-acid sequence, 64 residues long: Bacteriocin plantaricin ASM1 (64 aa).

The signal sequence occupies residues 1-21 (MSKLVKTLTVDEISKIQTNGG). Positions 61–64 (SYHC) form a cross-link, lanthionine (Ser-Cys).

In terms of processing, contains 2 disulfide bonds.

It is found in the secreted. Bacteriocin with a narrow antibacterial spectrum. Antibacterial activity against the Gram-positive bacteria L.plantarun, L.pentosus, L.curvatus, L.lindneri, L.mesenteroides and E.faecilis. Lacks antibacterial activity against the Gram-positive bacteria L.brevis, L.sakei, L.lactis, P.acidilactici, B.subtilis, B.cereus, L.monocytogenes and S.aureus, and against the Gram-negative bacteria E.coli and S.typhimurium. The protein is Bacteriocin plantaricin ASM1 of Lactiplantibacillus plantarum (Lactobacillus plantarum).